Here is a 469-residue protein sequence, read N- to C-terminus: Argininosuccinate lyase (469 aa).

The protein belongs to the lyase 1 family. Argininosuccinate lyase subfamily.

It is found in the cytoplasm. The enzyme catalyses 2-(N(omega)-L-arginino)succinate = fumarate + L-arginine. It functions in the pathway amino-acid biosynthesis; L-arginine biosynthesis; L-arginine from L-ornithine and carbamoyl phosphate: step 3/3. This is Argininosuccinate lyase from Paracoccus denitrificans (strain Pd 1222).